The following is a 490-amino-acid chain: Lysine--tRNA ligase (490 aa).

Positions 398 and 405 each coordinate Mg(2+).

It belongs to the class-II aminoacyl-tRNA synthetase family. In terms of assembly, homodimer. The cofactor is Mg(2+).

It is found in the cytoplasm. It catalyses the reaction tRNA(Lys) + L-lysine + ATP = L-lysyl-tRNA(Lys) + AMP + diphosphate. This is Lysine--tRNA ligase from Metamycoplasma arthritidis (strain 158L3-1) (Mycoplasma arthritidis).